Here is a 167-residue protein sequence, read N- to C-terminus: N-alpha-acetyltransferase (167 aa).

Residues 12–167 enclose the N-acetyltransferase domain; sequence FTLRNARMDD…EDAYLMARPL (156 aa). Substrate is bound at residue Tyr37. His88 contributes to the Zn(2+) binding site. Acetyl-CoA contacts are provided by residues 92 to 94 and 100 to 105; these read IAV and RKGIAT. Glu127 serves as a coordination point for Zn(2+). Acetyl-CoA contacts are provided by residues Asn132 and 139–141; that span reads YEK. Tyr154 is a binding site for substrate.

Belongs to the acetyltransferase family. ARD1 subfamily. In terms of assembly, homodimer.

It localises to the cytoplasm. It catalyses the reaction N-terminal L-alanyl-[protein] + acetyl-CoA = N-terminal N(alpha)-acetyl-L-alanyl-[protein] + CoA + H(+). The enzyme catalyses N-terminal L-seryl-[protein] + acetyl-CoA = N-terminal N(alpha)-acetyl-L-seryl-[protein] + CoA + H(+). It carries out the reaction N-terminal L-methionyl-L-leucyl-[protein] + acetyl-CoA = N-terminal N(alpha)-acetyl-L-methionyl-L-leucyl-[protein] + CoA + H(+). The catalysed reaction is N-terminal L-methionyl-L-glutamyl-[protein] + acetyl-CoA = N-terminal N(alpha)-acetyl-L-methionyl-L-glutamyl-[protein] + CoA + H(+). Its function is as follows. Displays alpha (N-terminal) acetyltransferase activity. Catalyzes the covalent attachment of an acetyl moiety from acetyl-CoA to the free alpha-amino group at the N-terminus of a protein. NAT is able to acetylate the alpha-amino group of methionine, alanine and serine N-terminal residue substrates, however it has a preference for Ser-N-terminal substrates. The chain is N-alpha-acetyltransferase from Saccharolobus solfataricus (strain ATCC 35092 / DSM 1617 / JCM 11322 / P2) (Sulfolobus solfataricus).